The primary structure comprises 623 residues: mRNA-capping enzyme (623 aa).

The TPase stretch occupies residues 13–224 (MGLPDRWLHC…IDNGRPSTSQ (212 aa)). Residues 44 to 196 (YDNQIAERRY…YDPTEDDKIL (153 aa)) form the Tyrosine-protein phosphatase domain. Cysteine 136 (phosphocysteine intermediate) is an active-site residue. Polar residues predominate over residues 213-229 (TQIDNGRPSTSQQIPAT). Residues 213–243 (TQIDNGRPSTSQQIPATNGNNNQNGNQLSGG) form a disordered region. A compositionally biased stretch (low complexity) spans 230–239 (NGNNNQNGNQ). A GTase region spans residues 241–585 (SGGGDNSKLF…NPVTETYLIE (345 aa)). The active-site N6-GMP-lysine intermediate is lysine 311. Residues arginine 316, arginine 331, 357-359 (DTE), 477-479 (KWK), and 553-558 (RERTDK) contribute to the GTP site. The tract at residues 603 to 623 (HHQIHQQQLHEGEPEARRQKL) is disordered. The segment covering 610 to 623 (QLHEGEPEARRQKL) has biased composition (basic and acidic residues).

This sequence in the N-terminal section; belongs to the non-receptor class of the protein-tyrosine phosphatase family. In the C-terminal section; belongs to the eukaryotic GTase family.

It localises to the nucleus. The catalysed reaction is a 5'-end triphospho-ribonucleoside in mRNA + H2O = a 5'-end diphospho-ribonucleoside in mRNA + phosphate + H(+). The enzyme catalyses a 5'-end diphospho-ribonucleoside in mRNA + GTP + H(+) = a 5'-end (5'-triphosphoguanosine)-ribonucleoside in mRNA + diphosphate. Its activity is regulated as follows. RNA triphosphatase activity is inhibited by magnesium. In terms of biological role, bifunctional mRNA-capping enzyme exhibiting RNA 5'-triphosphate monophosphatase activity in the N-terminal part and mRNA guanylyltransferase activity in the C-terminal part. Catalyzes the first two steps of cap formation: by removing the gamma-phosphate from the 5'-triphosphate end of nascent mRNA to yield a diphosphate end, and by transferring the GMP moiety of GTP to the 5'-diphosphate terminus via a covalent enzyme-GMP reaction intermediate. This chain is mRNA-capping enzyme (cel-1), found in Caenorhabditis elegans.